We begin with the raw amino-acid sequence, 177 residues long: Protein C (177 aa).

The segment covering 1–10 has biased composition (polar residues); sequence MSTKAWNASR. The segment at 1–37 is disordered; sequence MSTKAWNASRLSGPDPSTPWSLKKPLQHGSRPPKGKR.

It belongs to the morbillivirus protein C family.

This chain is Protein C (P/V/C), found in Bos indicus (Zebu).